The chain runs to 220 residues: RPA-interacting protein B (220 aa).

The interval 1–45 is interaction with importin beta; the sequence is MEAERRHRALYKGTTPPWKETYRKRCVERLKSNRSKLLDKFRQVG. The interaction with RPA1 stretch occupies residues 49–165; the sequence is HGGVGGSFLV…QCGVYINTQS (117 aa). Residues 138–213 form an RIP-type zinc finger; sequence CPVCNRNYLT…ASLFMSCQEC (76 aa).

In terms of assembly, interacts directly with the RPA1 subunit of RPA complex. Interacts with importin beta, but not with importin alpha. Forms a complex with the RPA complex and importin beta, which is dissociated by Ran-GTP.

It is found in the nucleus. In terms of biological role, mediates the import of RPA complex into the nucleus, via its interaction with importin beta. This is RPA-interacting protein B (rpain-b) from Xenopus laevis (African clawed frog).